The sequence spans 590 residues: Muscarinic acetylcholine receptor M3 (590 aa).

Residues 1-67 (MTLHNNSTTS…DPLGGHTVWQ (67 aa)) lie on the Extracellular side of the membrane. Residues Asn5, Asn6, Asn15, Asn41, and Asn48 are each glycosylated (N-linked (GlcNAc...) asparagine). Residues 68-91 (VVFIAFLTGILALVTIIGNILVIV) traverse the membrane as a helical segment. Over 92–104 (SFKVNKQLKTVNN) the chain is Cytoplasmic. The chain crosses the membrane as a helical span at residues 105 to 130 (YFLLSLACADLIIGVISMNLFTTYII). Over 131 to 142 (MNRWALGNLACD) the chain is Extracellular. The cysteines at positions 141 and 221 are disulfide-linked. The chain crosses the membrane as a helical span at residues 143-164 (LWLAIDYVASNASVMNLLVISF). Over 165-184 (DRYFSITRPLTYRAKRTTKR) the chain is Cytoplasmic. The chain crosses the membrane as a helical span at residues 185-206 (AGVMIGLAWVISFVLWAPAILF). Over 207–229 (WQYFVGKRTVPPGECFIQFLSEP) the chain is Extracellular. Residues 230–252 (TITFGTAIAAFYMPVTIMTILYW) form a helical membrane-spanning segment. The Cytoplasmic portion of the chain corresponds to 253–491 (RIYKETEKRT…SLVKEKKAAQ (239 aa)). The Basolateral sorting signal signature appears at 275–281 (AETENFV). The segment at 323-357 (SSEQMDQDHSSSDSWNNNDAAASLENSASSDEEDI) is disordered. The segment covering 334-345 (SDSWNNNDAAAS) has biased composition (low complexity). Residue Ser385 is modified to Phosphoserine. Residues 492–514 (TLSAILLAFIITWTPYNIMVLVN) traverse the membrane as a helical segment. Topologically, residues 515-526 (TFCDSCIPKTFW) are extracellular. The cysteines at positions 517 and 520 are disulfide-linked. Residues 527-546 (NLGYWLCYINSTVNPVCYAL) form a helical membrane-spanning segment. The Cytoplasmic portion of the chain corresponds to 547–590 (CNKTFRTTFKMLLLCQCGKKKRRKQQYQQRQSVIFHKRAPEQAL).

This sequence belongs to the G-protein coupled receptor 1 family. Muscarinic acetylcholine receptor subfamily. CHRM3 sub-subfamily. In terms of assembly, homodimer; the dimers can form tetramers. Interacts with NALCN. Interacts with TMEM147.

The protein resides in the cell membrane. The protein localises to the postsynaptic cell membrane. Its subcellular location is the basolateral cell membrane. It is found in the endoplasmic reticulum membrane. In terms of biological role, the muscarinic acetylcholine receptor mediates various cellular responses, including inhibition of adenylate cyclase, breakdown of phosphoinositides and modulation of potassium channels through the action of G proteins. Primary transducing effect is Pi turnover. This chain is Muscarinic acetylcholine receptor M3 (CHRM3), found in Gorilla gorilla gorilla (Western lowland gorilla).